A 145-amino-acid polypeptide reads, in one-letter code: Protein SprT-like (145 aa).

The SprT-like domain occupies 4 to 140 (TNYVQEVSLA…VCGNCHGKLM (137 aa)). His-64 provides a ligand contact to Zn(2+). Residue Glu-65 is part of the active site. His-68 is a binding site for Zn(2+).

The protein belongs to the SprT family. Requires Zn(2+) as cofactor.

Its subcellular location is the cytoplasm. The chain is Protein SprT-like from Streptococcus pyogenes serotype M3 (strain SSI-1).